The sequence spans 311 residues: Putative S-adenosyl-L-methionine-dependent methyltransferase MUL_4761 (311 aa).

Residues Asp-132 and 161-162 contribute to the S-adenosyl-L-methionine site; that span reads DL.

The protein belongs to the UPF0677 family.

Its function is as follows. Exhibits S-adenosyl-L-methionine-dependent methyltransferase activity. This is Putative S-adenosyl-L-methionine-dependent methyltransferase MUL_4761 from Mycobacterium ulcerans (strain Agy99).